A 156-amino-acid chain; its full sequence is MSLVPSFFGGRRTNVFDPFSLDVWDPFEGFLTPGLTNAPAKDVAAFTNAKVDWRETPEAHVFKADVPGLKKEEVKVEVEDGNILQISGERSSENEEKSDTWHRVERSSGKFMRRFRLPENAKVEEVKASMENGVLSVTVPKVQESKPEVKSVDISG.

The 115-residue stretch at 42–156 folds into the sHSP domain; sequence DVAAFTNAKV…PEVKSVDISG (115 aa).

This sequence belongs to the small heat shock protein (HSP20) family. As to quaternary structure, may form oligomeric structures. Binds to AKR2A.

The protein resides in the cytoplasm. The protein is 17.4 kDa class I heat shock protein (HSP17.4A) of Arabidopsis thaliana (Mouse-ear cress).